A 356-amino-acid chain; its full sequence is 11-beta-hydroxysteroid dehydrogenase (356 aa).

A helical; Signal-anchor for type II membrane protein transmembrane segment spans residues 10-30 (LVVPPAGLLMLAFAWPSLAFF). Residues 13 to 26 (PPAGLLMLAFAWPS) carry the Proline-knob motif. 54–85 (GASSGIGEQIAYQYAKRRANLVLVARREHRLR) contacts NADP(+). Residue Ser184 participates in substrate binding. Residue Tyr197 is the Proton acceptor of the active site. Residues 197–201 (YNAAK) and Lys201 each bind NADP(+).

The protein belongs to the short-chain dehydrogenases/reductases (SDR) family. As to expression, expressed in megagametophytes (at protein level).

The protein localises to the lipid droplet. The protein resides in the membrane. The catalysed reaction is an 11beta-hydroxysteroid + NADP(+) = an 11-oxosteroid + NADPH + H(+). It carries out the reaction corticosterone + NADP(+) = 11-dehydrocorticosterone + NADPH + H(+). The enzyme catalyses 17beta-estradiol + NADP(+) = estrone + NADPH + H(+). Has dehydrogenase activity against corticosterone (11 beta-hydroxysteroid) and estradiol (17 beta-hydroxysteroid) in the presence of NADP(+). May be involved in signal transduction regulated by various sterols. The protein is 11-beta-hydroxysteroid dehydrogenase of Pinus massoniana (Chinese red pine).